The sequence spans 598 residues: Probable translation initiation factor IF-2 (598 aa).

The tr-type G domain maps to 3-225 (LRCPIVSVLG…GLAQRFLEQK (223 aa)). The interval 12–19 (GHVDHGKT) is G1. 12-19 (GHVDHGKT) is a binding site for GTP. A G2 region spans residues 37–41 (GITQH). A G3 region spans residues 76-79 (DTPG). Residues 76 to 80 (DTPGH) and 130 to 133 (NKVD) each bind GTP. Residues 130 to 133 (NKVD) form a G4 region. Residues 200-202 (SAM) are G5.

Belongs to the TRAFAC class translation factor GTPase superfamily. Classic translation factor GTPase family. IF-2 subfamily.

Its function is as follows. Function in general translation initiation by promoting the binding of the formylmethionine-tRNA to ribosomes. Seems to function along with eIF-2. This Methanococcus maripaludis (strain DSM 14266 / JCM 13030 / NBRC 101832 / S2 / LL) protein is Probable translation initiation factor IF-2.